Consider the following 421-residue polypeptide: Ribulose bisphosphate carboxylase large chain (421 aa).

Positions 68 and 118 each coordinate substrate. Residue Lys-120 is the Proton acceptor of the active site. Residue Lys-122 coordinates substrate. The Mg(2+) site is built by Lys-146, Asp-148, and Glu-149. The residue at position 146 (Lys-146) is an N6-carboxylysine. His-239 functions as the Proton acceptor in the catalytic mechanism. The substrate site is built by Arg-240, His-272, and Ser-324.

The protein belongs to the RuBisCO large chain family. Type I subfamily. Heterohexadecamer of 8 large chains and 8 small chains; disulfide-linked. The disulfide link is formed within the large subunit homodimers. Mg(2+) is required as a cofactor. Post-translationally, the disulfide bond which can form in the large chain dimeric partners within the hexadecamer appears to be associated with oxidative stress and protein turnover.

Its subcellular location is the plastid. The protein localises to the chloroplast. It carries out the reaction 2 (2R)-3-phosphoglycerate + 2 H(+) = D-ribulose 1,5-bisphosphate + CO2 + H2O. The catalysed reaction is D-ribulose 1,5-bisphosphate + O2 = 2-phosphoglycolate + (2R)-3-phosphoglycerate + 2 H(+). Its function is as follows. RuBisCO catalyzes two reactions: the carboxylation of D-ribulose 1,5-bisphosphate, the primary event in carbon dioxide fixation, as well as the oxidative fragmentation of the pentose substrate in the photorespiration process. Both reactions occur simultaneously and in competition at the same active site. The polypeptide is Ribulose bisphosphate carboxylase large chain (rbcL) (Aegilops crassa (Persian goatgrass)).